The following is a 392-amino-acid chain: 1-deoxy-D-xylulose 5-phosphate reductoisomerase (392 aa).

Residues Thr10, Gly11, Ser12, Ile13, Asn38, and Asn124 each contribute to the NADPH site. Lys125 contacts 1-deoxy-D-xylulose 5-phosphate. Glu126 lines the NADPH pocket. A Mn(2+)-binding site is contributed by Asp150. The 1-deoxy-D-xylulose 5-phosphate site is built by Ser151, Glu152, Ser176, and His199. Glu152 is a binding site for Mn(2+). Gly205 provides a ligand contact to NADPH. Ser212, Asn217, Lys218, and Glu221 together coordinate 1-deoxy-D-xylulose 5-phosphate. Residue Glu221 participates in Mn(2+) binding.

Belongs to the DXR family. The cofactor is Mg(2+). Mn(2+) is required as a cofactor.

It carries out the reaction 2-C-methyl-D-erythritol 4-phosphate + NADP(+) = 1-deoxy-D-xylulose 5-phosphate + NADPH + H(+). It participates in isoprenoid biosynthesis; isopentenyl diphosphate biosynthesis via DXP pathway; isopentenyl diphosphate from 1-deoxy-D-xylulose 5-phosphate: step 1/6. In terms of biological role, catalyzes the NADPH-dependent rearrangement and reduction of 1-deoxy-D-xylulose-5-phosphate (DXP) to 2-C-methyl-D-erythritol 4-phosphate (MEP). In Synechococcus sp. (strain JA-2-3B'a(2-13)) (Cyanobacteria bacterium Yellowstone B-Prime), this protein is 1-deoxy-D-xylulose 5-phosphate reductoisomerase.